The sequence spans 1181 residues: DNA-directed RNA polymerase subunit beta' (1181 aa).

Zn(2+) contacts are provided by C68, C70, C83, and C86. Mg(2+) contacts are provided by D457, D459, and D461. The Zn(2+) site is built by C802, C876, C883, and C886.

Belongs to the RNA polymerase beta' chain family. As to quaternary structure, the RNAP catalytic core consists of 2 alpha, 1 beta, 1 beta' and 1 omega subunit. When a sigma factor is associated with the core the holoenzyme is formed, which can initiate transcription. It depends on Mg(2+) as a cofactor. Requires Zn(2+) as cofactor.

The catalysed reaction is RNA(n) + a ribonucleoside 5'-triphosphate = RNA(n+1) + diphosphate. Functionally, DNA-dependent RNA polymerase catalyzes the transcription of DNA into RNA using the four ribonucleoside triphosphates as substrates. This chain is DNA-directed RNA polymerase subunit beta', found in Syntrophomonas wolfei subsp. wolfei (strain DSM 2245B / Goettingen).